The chain runs to 518 residues: Glutamate--cysteine ligase (518 aa).

The protein belongs to the glutamate--cysteine ligase type 1 family. Type 1 subfamily.

The catalysed reaction is L-cysteine + L-glutamate + ATP = gamma-L-glutamyl-L-cysteine + ADP + phosphate + H(+). The protein operates within sulfur metabolism; glutathione biosynthesis; glutathione from L-cysteine and L-glutamate: step 1/2. The sequence is that of Glutamate--cysteine ligase from Shigella boydii serotype 18 (strain CDC 3083-94 / BS512).